The primary structure comprises 512 residues: Maturase K (512 aa).

This sequence belongs to the intron maturase 2 family. MatK subfamily.

Its subcellular location is the plastid. It localises to the chloroplast. Usually encoded in the trnK tRNA gene intron. Probably assists in splicing its own and other chloroplast group II introns. The polypeptide is Maturase K (Dalea wrightii (Wright's prairie clover)).